A 385-amino-acid polypeptide reads, in one-letter code: 8-amino-7-oxononanoate synthase (385 aa).

Position 21 (arginine 21) interacts with substrate. Residue 108–109 (GF) coordinates pyridoxal 5'-phosphate. Position 133 (histidine 133) interacts with substrate. Residues serine 179, histidine 207, and threonine 233 each contribute to the pyridoxal 5'-phosphate site. Lysine 236 bears the N6-(pyridoxal phosphate)lysine mark. Residue threonine 352 participates in substrate binding.

The protein belongs to the class-II pyridoxal-phosphate-dependent aminotransferase family. BioF subfamily. In terms of assembly, homodimer. Requires pyridoxal 5'-phosphate as cofactor.

The enzyme catalyses 6-carboxyhexanoyl-[ACP] + L-alanine + H(+) = (8S)-8-amino-7-oxononanoate + holo-[ACP] + CO2. The protein operates within cofactor biosynthesis; biotin biosynthesis. In terms of biological role, catalyzes the decarboxylative condensation of pimeloyl-[acyl-carrier protein] and L-alanine to produce 8-amino-7-oxononanoate (AON), [acyl-carrier protein], and carbon dioxide. The protein is 8-amino-7-oxononanoate synthase of Salmonella agona (strain SL483).